A 124-amino-acid polypeptide reads, in one-letter code: Seripauperin-17 (124 aa).

The signal sequence occupies residues Met1 to Ala20.

This sequence belongs to the SRP1/TIP1 family. Seripauperin subfamily.

This Saccharomyces cerevisiae (strain ATCC 204508 / S288c) (Baker's yeast) protein is Seripauperin-17 (PAU17).